The sequence spans 710 residues: MDIHRCRFIDYTPSAITAMAFSHKSGQNDSMPNNLLLAVGRASGNIEIWNPRNDWCLKTVLYGGVDRSIEGIVWSTGEEELRLFSIGFSTTITEWNLHTGKPLVNQDSNAGAIWSIAICDETKTLAVGCDDGSCVLFDISGGPGVIEFKRVLMRQTSRILSLDFQTKDHLVGGCADGVIKVWDLSTPNSAIISRMQVDRARKGEAALIWAVKSLRDGTIVSADSSGAVKFWNGKFFTLSQSFKLHLADALCLGVSANGDMVFSSGIDRKTIQYSREGGKREWVSNSFRRFHSHDVRCMAVFECKSLDVLISGGMDMMLAVIPVRQFNRKNHRMISAVPQRPRMAVAPKARLFMLWNDHEVLLWRIGSPGYRFLLKIVLADEENISHAAISPDGELIAISSVLRTKLYQLQYSDENVKVETVEDSFLSNIGASLLSFTVDKNKLILVSNDSEIFLIELSRLDSRQLEVFELSQPTSKKIAPRQRSNVSSMCDGICSIAVSSDGDYFAVADTVGNIFCYSLSNLTYSELPRVNTYVRAMAFRPDVRGRLAVATAGNQVYEFDVQSRKLSEWSKNNSTNMPKEFSQLLDKAFGAFFDSKHPSRFWIWSANWVSFFDLNLQLPAPRAAGKRKIEMNATVDGNLNDKKLANANSNGISNYGTGDSRCFWITHKYRPMLLVGSVGNSELLVVERPIADMLMSKSMPASFYEHKFGS.

9 WD repeats span residues 11 to 59, 64 to 105, 108 to 147, 154 to 192, 199 to 241, 290 to 327, 328 to 365, 488 to 527, and 529 to 569; these read YTPS…CLKT, GVDR…PLVN, SNAGAIWSIAICDETKTLAVGCDDGSCVLFDISGGPGVIE, RQTSRILSLDFQTKDHLVGGCADGVIKVWDLSTPNSAII, RARK…LSQS, FHSHDVRCMAVFECKSLDVLISGGMDMMLAVIPVRQFN, RKNHRMISAVPQRPRMAVAPKARLFMLWNDHEVLLWRI, SMCDGICSIAVSSDGDYFAVADTVGNIFCYSLSNLTYSEL, and RVNT…LSEW.

In terms of assembly, component of the ribosomal small subunit (SSU) processome.

It is found in the nucleus. Its subcellular location is the nucleolus. Functionally, involved in nucleolar processing of pre-18S ribosomal RNA. Required for optimal pre-ribosomal RNA transcription by RNA polymerase I together with a subset of U3 proteins required for transcription (t-UTPs). This is U3 small nucleolar RNA-associated protein 4 (utp4) from Schizosaccharomyces pombe (strain 972 / ATCC 24843) (Fission yeast).